We begin with the raw amino-acid sequence, 283 residues long: Acetylglutamate kinase (283 aa).

Substrate contacts are provided by residues 63-64, R85, and N178; that span reads GG.

It belongs to the acetylglutamate kinase family. ArgB subfamily.

The protein resides in the cytoplasm. It catalyses the reaction N-acetyl-L-glutamate + ATP = N-acetyl-L-glutamyl 5-phosphate + ADP. It functions in the pathway amino-acid biosynthesis; L-arginine biosynthesis; N(2)-acetyl-L-ornithine from L-glutamate: step 2/4. Functionally, catalyzes the ATP-dependent phosphorylation of N-acetyl-L-glutamate. This is Acetylglutamate kinase from Prochlorococcus marinus (strain AS9601).